Reading from the N-terminus, the 240-residue chain is Ribose-5-phosphate isomerase A (240 aa).

The segment at 1-23 (MKTSGGSDAAKRRAGESAAETVT) is disordered. Substrate-binding positions include 32-35 (TGST), 92-95 (DGAD), and 111-114 (KGGG). Glu-120 (proton acceptor) is an active-site residue. Lys-138 lines the substrate pocket.

The protein belongs to the ribose 5-phosphate isomerase family. Homodimer.

It carries out the reaction aldehydo-D-ribose 5-phosphate = D-ribulose 5-phosphate. The protein operates within carbohydrate degradation; pentose phosphate pathway; D-ribose 5-phosphate from D-ribulose 5-phosphate (non-oxidative stage): step 1/1. Its function is as follows. Catalyzes the reversible conversion of ribose-5-phosphate to ribulose 5-phosphate. The sequence is that of Ribose-5-phosphate isomerase A from Halorubrum lacusprofundi (strain ATCC 49239 / DSM 5036 / JCM 8891 / ACAM 34).